Reading from the N-terminus, the 435-residue chain is Methylenetetrahydrofolate--tRNA-(uracil-5-)-methyltransferase TrmFO (435 aa).

An FAD-binding site is contributed by 9 to 14 (GAGLAG).

This sequence belongs to the MnmG family. TrmFO subfamily. Requires FAD as cofactor.

It is found in the cytoplasm. It catalyses the reaction uridine(54) in tRNA + (6R)-5,10-methylene-5,6,7,8-tetrahydrofolate + NADH + H(+) = 5-methyluridine(54) in tRNA + (6S)-5,6,7,8-tetrahydrofolate + NAD(+). The catalysed reaction is uridine(54) in tRNA + (6R)-5,10-methylene-5,6,7,8-tetrahydrofolate + NADPH + H(+) = 5-methyluridine(54) in tRNA + (6S)-5,6,7,8-tetrahydrofolate + NADP(+). Catalyzes the folate-dependent formation of 5-methyl-uridine at position 54 (M-5-U54) in all tRNAs. This Staphylococcus aureus (strain Newman) protein is Methylenetetrahydrofolate--tRNA-(uracil-5-)-methyltransferase TrmFO.